Consider the following 960-residue polypeptide: Lon protease homolog, mitochondrial (960 aa).

Residues 1–56 constitute a mitochondrion transit peptide; that stretch reads MYRAGALVLRSATLRRTRFLAAHQNFATISSQRSSVLLAKSLESSIGGAGNQKKFY. The region spanning 92-352 is the Lon N-terminal domain; it reads VPILAINRYP…IALLLIQKEK (261 aa). Residues 195 to 250 are disordered; it reads PKTDTPLNGRRARGKRAGLPPTPPPTPPLSTPTSAPEASATSPEEKEEKKDPERKG. Pro residues predominate over residues 214–224; sequence PPTPPPTPPLS. The segment covering 225 to 236 has biased composition (low complexity); sequence TPTSAPEASATS. Over residues 237 to 250 the composition is skewed to basic and acidic residues; sequence PEEKEEKKDPERKG. 505–512 provides a ligand contact to ATP; that stretch reads GPPGVGKT. Residues 712-748 form a disordered region; it reads EQQPEDEQPAATTAISENSDAEPVSTPSDPPTFTPEK. Residues 773–960 enclose the Lon proteolytic domain; the sequence is VTPPGVIMGL…YDELYEHLFQ (188 aa). Catalysis depends on residues S867 and K910.

It belongs to the peptidase S16 family. Homohexamer or homoheptamer. Organized in a ring with a central cavity.

It is found in the mitochondrion matrix. The enzyme catalyses Hydrolysis of proteins in presence of ATP.. Its function is as follows. ATP-dependent serine protease that mediates the selective degradation of misfolded, unassembled or oxidatively damaged polypeptides as well as certain short-lived regulatory proteins in the mitochondrial matrix. May also have a chaperone function in the assembly of inner membrane protein complexes. Participates in the regulation of mitochondrial gene expression and in the maintenance of the integrity of the mitochondrial genome. Binds to mitochondrial DNA in a site-specific manner. This is Lon protease homolog, mitochondrial from Caenorhabditis briggsae.